The sequence spans 283 residues: uncharacterized protein (283 aa).

This is an uncharacterized protein from Streptomyces coelicolor (strain ATCC BAA-471 / A3(2) / M145).